Consider the following 216-residue polypeptide: Large ribosomal subunit protein uL1 (216 aa).

Belongs to the universal ribosomal protein uL1 family.

The polypeptide is Large ribosomal subunit protein uL1 (Caenorhabditis elegans).